A 274-amino-acid polypeptide reads, in one-letter code: MAGWLGELELVYAWRRGQTIPVRAYASAPLKLQRSFYPEGKPICHSVILHTAGGYVGGDRLHQKITLEPQCRVLLTTPAATKVYGRAQIPVEQTLHCHVADEAVLEWLPQETIIFAGAQFHQRLRIDLAPQAQVGLWEMTRFGRTARGEVFNRGYWRYHTEVWQGGVPLWIDRQRIEGTKMMLTAMNALQGCPLMGTLAWVGREVSSEQIQRLRDLAMGIQGEMGVSTLIRGVVCRYRGHSMAELRRWFVAAWQLLRPGQGSHPLVCYPRVWPR.

It belongs to the UreD family. As to quaternary structure, ureD, UreF and UreG form a complex that acts as a GTP-hydrolysis-dependent molecular chaperone, activating the urease apoprotein by helping to assemble the nickel containing metallocenter of UreC. The UreE protein probably delivers the nickel.

It is found in the cytoplasm. Required for maturation of urease via the functional incorporation of the urease nickel metallocenter. This is Urease accessory protein UreD from Thermosynechococcus vestitus (strain NIES-2133 / IAM M-273 / BP-1).